A 243-amino-acid polypeptide reads, in one-letter code: MKKVLIAALIAGFSLSATAAETIRFATEASYPPFESIDANNQIVGFDVDLAQALCKEIDATCTFSNQAFDSLIPSLKFRRVEAVMAGMDITPEREKQVLFTTPYYDNSALFVGQQGKYTSVDQLKGKKVGVQNGTTHQKFIMDKHPEITTVPYDSYQNAKLDLQNGRIDGVFGDTAVVTEWLKDNPKLAAVGDKVTDKDYFGTGLGIAVRQGNTELQQKLNTALEKVKKDGTYETIYNKWFQK.

Residues 1–19 (MKKVLIAALIAGFSLSATA) form the signal peptide.

Belongs to the bacterial solute-binding protein 3 family. In terms of assembly, the complex is composed of two ATP-binding proteins (ArtP), two transmembrane proteins (ArtM and ArtQ) and two solute-binding proteins (ArtJ and ArtI).

Its subcellular location is the periplasm. In terms of biological role, part of the ABC transporter complex ArtPIQMJ involved in arginine transport. The polypeptide is Putative ABC transporter arginine-binding protein 2 (artI) (Escherichia coli (strain K12)).